We begin with the raw amino-acid sequence, 304 residues long: Small ribosomal subunit biogenesis GTPase RsgA (304 aa).

The CP-type G domain occupies 78–237; sequence HSFLTRPPVA…VADTPGFNRP (160 aa). GTP-binding positions include 127-130 and 179-187; these read TKTD and GPSGVGKSS. The Zn(2+) site is built by Cys262, Cys267, His269, and Cys275.

It belongs to the TRAFAC class YlqF/YawG GTPase family. RsgA subfamily. As to quaternary structure, monomer. Associates with 30S ribosomal subunit, binds 16S rRNA. Requires Zn(2+) as cofactor.

The protein resides in the cytoplasm. In terms of biological role, one of several proteins that assist in the late maturation steps of the functional core of the 30S ribosomal subunit. Helps release RbfA from mature subunits. May play a role in the assembly of ribosomal proteins into the subunit. Circularly permuted GTPase that catalyzes slow GTP hydrolysis, GTPase activity is stimulated by the 30S ribosomal subunit. The polypeptide is Small ribosomal subunit biogenesis GTPase RsgA (Synechococcus sp. (strain CC9605)).